A 453-amino-acid chain; its full sequence is Retroviral integration site protein Fli-1 homolog (453 aa).

In terms of domain architecture, PNT spans 111–197 (PPPPNMTTNE…SHLNYLRDSS (87 aa)). The segment covering 201 to 214 (GYNTQAHTDQSSRL) has biased composition (polar residues). The disordered stretch occupies residues 201-273 (GYNTQAHTDQ…YQILGPTSSR (73 aa)). Basic and acidic residues predominate over residues 215–226 (TAKEDPSYEAVR). 2 stretches are compositionally biased toward polar residues: residues 230–239 (WGNSMSSPVT) and 246–273 (GTQNVNKSGDQQRSQPDPYQILGPTSSR). A DNA-binding region (ETS) is located at residues 282 to 362 (IQLWQFLLEL…HGKRYAYKFD (81 aa)).

It belongs to the ETS family.

It localises to the nucleus. In Xenopus laevis (African clawed frog), this protein is Retroviral integration site protein Fli-1 homolog (fli1).